The chain runs to 236 residues: Uridylate kinase (236 aa).

10 to 13 is an ATP binding site; the sequence is KLSG. G52 is a binding site for UMP. G53 and R57 together coordinate ATP. Residues D72 and 133 to 140 contribute to the UMP site; that span reads TGNPFFTT. The ATP site is built by T160, Y166, and D169.

The protein belongs to the UMP kinase family. As to quaternary structure, homohexamer.

It localises to the cytoplasm. It catalyses the reaction UMP + ATP = UDP + ADP. Its pathway is pyrimidine metabolism; CTP biosynthesis via de novo pathway; UDP from UMP (UMPK route): step 1/1. Its activity is regulated as follows. Inhibited by UTP. Catalyzes the reversible phosphorylation of UMP to UDP. This is Uridylate kinase from Cupriavidus necator (strain ATCC 17699 / DSM 428 / KCTC 22496 / NCIMB 10442 / H16 / Stanier 337) (Ralstonia eutropha).